We begin with the raw amino-acid sequence, 418 residues long: Glutamyl-tRNA reductase (418 aa).

Substrate-binding positions include 49–52 (TCNR), S109, 114–116 (EPQ), and Q120. The active-site Nucleophile is C50. 189–194 (GAGETI) contacts NADP(+).

This sequence belongs to the glutamyl-tRNA reductase family. In terms of assembly, homodimer.

The catalysed reaction is (S)-4-amino-5-oxopentanoate + tRNA(Glu) + NADP(+) = L-glutamyl-tRNA(Glu) + NADPH + H(+). Its pathway is porphyrin-containing compound metabolism; protoporphyrin-IX biosynthesis; 5-aminolevulinate from L-glutamyl-tRNA(Glu): step 1/2. Catalyzes the NADPH-dependent reduction of glutamyl-tRNA(Glu) to glutamate 1-semialdehyde (GSA). The protein is Glutamyl-tRNA reductase of Escherichia fergusonii (strain ATCC 35469 / DSM 13698 / CCUG 18766 / IAM 14443 / JCM 21226 / LMG 7866 / NBRC 102419 / NCTC 12128 / CDC 0568-73).